Reading from the N-terminus, the 906-residue chain is Protein transport protein SEC24-2 (906 aa).

Residues Cys222, Cys225, Cys244, and Cys247 each contribute to the Zn(2+) site. A zinc finger-like region spans residues Cys222–Cys247.

This sequence belongs to the SEC23/SEC24 family. SEC24 subfamily. The COPII coat is composed of at least 5 proteins: the SEC23/24 complex, the SEC13/31 complex, and the protein SAR1. Golgi apparatus membrane; Peripheral membrane protein; Cytoplasmic side.

It localises to the cytoplasm. The protein localises to the cytoplasmic vesicle. The protein resides in the COPII-coated vesicle membrane. It is found in the endoplasmic reticulum membrane. Its subcellular location is the golgi apparatus membrane. Functionally, component of the coat protein complex II (COPII) which promotes the formation of transport vesicles from the endoplasmic reticulum (ER). The coat has two main functions, the physical deformation of the endoplasmic reticulum membrane into vesicles and the selection of cargo molecules. The protein is Protein transport protein SEC24-2 (SEC242) of Candida glabrata (strain ATCC 2001 / BCRC 20586 / JCM 3761 / NBRC 0622 / NRRL Y-65 / CBS 138) (Yeast).